The chain runs to 259 residues: (3R)-3-hydroxyacyl-CoA dehydrogenase (259 aa).

NAD(+)-binding positions include 13–21 (LVTGAGSGI) and 40–41 (DL). Serine 58 bears the Phosphoserine mark. Lysine 66 carries the N6-acetyllysine modification. 72–74 (ADV) is an NAD(+) binding site. Serine 154 lines the substrate pocket. Lysine 158 bears the N6-succinyllysine mark. The active-site Proton acceptor is tyrosine 167. Residues 167-171 (YASSK) and 200-202 (IAT) contribute to the NAD(+) site. Lysine 171 carries the N6-succinyllysine modification.

This sequence belongs to the short-chain dehydrogenases/reductases (SDR) family. Heterotetramer with CBR4; contains two molecules of HSD17B8 and CBR4. In terms of tissue distribution, expressed in ovary at protein level.

It is found in the mitochondrion matrix. It carries out the reaction a (3R)-3-hydroxyacyl-CoA + NAD(+) = a 3-oxoacyl-CoA + NADH + H(+). The enzyme catalyses 17beta-estradiol + NAD(+) = estrone + NADH + H(+). The catalysed reaction is testosterone + NAD(+) = androst-4-ene-3,17-dione + NADH + H(+). It catalyses the reaction 17beta-hydroxy-5alpha-androstan-3-one + NAD(+) = 5alpha-androstan-3,17-dione + NADH + H(+). The protein operates within steroid biosynthesis; estrogen biosynthesis. It functions in the pathway lipid metabolism; fatty acid biosynthesis. Its pathway is lipid metabolism; mitochondrial fatty acid beta-oxidation. Its function is as follows. Required for the solubility and assembly of the heterotetramer 3-ketoacyl-[acyl carrier protein] (ACP) reductase functional complex (KAR or KAR1) that forms part of the mitochondrial fatty acid synthase (mtFAS). Alpha-subunit of the KAR complex that acts as scaffold protein required for the stability of carbonyl reductase type-4 (CBR4, beta-subunit of the KAR complex) and for its 3-ketoacyl-ACP reductase activity, thereby participating in mitochondrial fatty acid biosynthesis. Catalyzes the NAD-dependent conversion of (3R)-3-hydroxyacyl-CoA into 3-ketoacyl-CoA (3-oxoacyl-CoA) with no chain length preference; this enzymatic activity is not needed for the KAR function. Prefers (3R)-3-hydroxyacyl-CoA over (3S)-3-hydroxyacyl-CoA and displays enzymatic activity only in the presence of NAD(+). Cooperates with enoyl-CoA hydratase 1 in mitochondria, together they constitute an alternative route to the auxiliary enzyme pathways for the breakdown of Z-PUFA (cis polyunsaturated fatty acid) enoyl-esters. NAD-dependent 17-beta-hydroxysteroid dehydrogenase with highest activity towards estradiol (17beta-estradiol or E2). Has very low activity towards testosterone and dihydrotestosterone (17beta-hydroxy-5alpha-androstan-3-one). Primarily an oxidative enzyme, it can switch to a reductive mode determined in the appropriate physiologic milieu and catalyze the reduction of estrone (E1) to form biologically active 17beta-estradiol. The chain is (3R)-3-hydroxyacyl-CoA dehydrogenase (Hsd17b8) from Rattus norvegicus (Rat).